The primary structure comprises 265 residues: Thymidine kinase 2, mitochondrial (265 aa).

A mitochondrion-targeting transit peptide spans 1–33 (MLLWPLRGWAARALRCFGPGSRGSPASGPGPRR). Low complexity predominate over residues 20–32 (GSRGSPASGPGPR). The tract at residues 20 to 47 (GSRGSPASGPGPRRVQRRAWPPDKEQEK) is disordered. 57–65 (GNIASGKTT) provides a ligand contact to ATP. Glu133 acts as the Proton acceptor in catalysis.

It belongs to the DCK/DGK family. In terms of assembly, monomer. In terms of tissue distribution, predominantly expressed in liver, pancreas, muscle, and brain.

The protein resides in the mitochondrion. The catalysed reaction is thymidine + ATP = dTMP + ADP + H(+). It catalyses the reaction 2'-deoxycytidine + ATP = dCMP + ADP + H(+). It carries out the reaction 2'-deoxyuridine + ATP = dUMP + ADP + H(+). Its function is as follows. Phosphorylates thymidine, deoxycytidine, and deoxyuridine in the mitochondrial matrix. In non-replicating cells, where cytosolic dNTP synthesis is down-regulated, mtDNA synthesis depends solely on TK2 and DGUOK. Widely used as target of antiviral and chemotherapeutic agents. The polypeptide is Thymidine kinase 2, mitochondrial (Homo sapiens (Human)).